A 153-amino-acid polypeptide reads, in one-letter code: ORM1-like protein 2 (153 aa).

The Cytoplasmic segment spans residues 1-21 (MNVGVAHSEVNPNTRVMNSRG). The next 2 membrane-spanning stretches (helical) occupy residues 22–42 (IWLA…SIPF) and 43–63 (FSIP…MYVF). Residues 64-105 (LHTVKGTPFETPDQGKARLLTHWEQMDYGLQFTSSRKFLSIS) are Cytoplasmic-facing. Residues 106–126 (PIVLYLLASFYTKYDAAHFLI) form a helical membrane-spanning segment. Over 127 to 153 (NTASLLSVLLPKLPQFHGVRLFGINKY) the chain is Extracellular.

This sequence belongs to the ORM family. Ceramide-sensitive subunit of the serine palmitoyltransferase (SPT) complex, which is also composed of SPTLC1, SPTLC2/3 and SPTSSA/B.

The protein resides in the endoplasmic reticulum membrane. Plays an essential role in the homeostatic regulation of sphingolipid de novo biosynthesis by modulating the activity of the serine palmitoyltransferase (SPT) in response to ceramide levels. When complexed to SPT, the binding of ceramides to its N-terminus stabilizes a conformation that block SPT substrate entry, hence preventing SPT catalytic activity. Through this mechanism, maintains ceramide levels at sufficient concentrations for the production of complex sphingolipids, but which prevents the accumulation of ceramides to levels that trigger apoptosis. The chain is ORM1-like protein 2 (ORMDL2) from Bos taurus (Bovine).